Here is a 350-residue protein sequence, read N- to C-terminus: Kelch domain-containing protein 8A (350 aa).

Kelch repeat units follow at residues 1-31 (MEVP…ETGG), 32-79 (QVYA…ALGK), 81-127 (IMVI…AKDY), 128-175 (RVYA…LRGS), 176-222 (KIYV…TLDN), 224-278 (LYSL…GLSG), and 279-326 (RVIV…VFKN).

The chain is Kelch domain-containing protein 8A (Klhdc8a) from Mus musculus (Mouse).